The following is a 243-amino-acid chain: Geranylgeranylglyceryl phosphate synthase (243 aa).

Positions 29 and 58 each coordinate Mg(2+). Residues 178 to 184, 209 to 210, and 231 to 232 each bind sn-glycerol 1-phosphate; these read YLEAGSG, GG, and GT.

This sequence belongs to the GGGP/HepGP synthase family. Group II subfamily. As to quaternary structure, homodimer. Requires Mg(2+) as cofactor.

It carries out the reaction sn-glycerol 1-phosphate + (2E,6E,10E)-geranylgeranyl diphosphate = sn-3-O-(geranylgeranyl)glycerol 1-phosphate + diphosphate. Prenyltransferase that catalyzes the transfer of the geranylgeranyl moiety of geranylgeranyl diphosphate (GGPP) to the C3 hydroxyl of sn-glycerol-1-phosphate (G1P). This is Geranylgeranylglyceryl phosphate synthase from Flavobacterium johnsoniae (strain ATCC 17061 / DSM 2064 / JCM 8514 / BCRC 14874 / CCUG 350202 / NBRC 14942 / NCIMB 11054 / UW101) (Cytophaga johnsonae).